We begin with the raw amino-acid sequence, 663 residues long: MIWNWLRKKKKSNTSKLNETDNQEQHSNNQEDDNKEQTRSMKHNKGKNNEQKDSSQDKQQSAKQGDSSQDKQQNPKQEDSSQDKQQNPKQGDSSQDKQQSAKQKDPSQDKQQNPKQEDSSQDKQQSAKQGDSSQDKQQSAKQGDSSQDKQQNAKQDEPSQSKQQSSGGNSIYDFTKPEKDRIHSLQNLIEKLKKSSDFVNYHTSDDETMPYWISYYRPSLDGEKLQKYLMPTLLERPNASLEELKEHIPMSGITITNDLQKIEDMVLKGHAIIQLNQQDQKCMLANIAIDNYRAPTPPLNESTVIGPQEGFVEDIDTNINLVRKRLPVLDLQTKEMIIGEFSKTKVVMMYLDNLAEKDNVDFLEESLRALEYDQINDSAYLQELMGEKSIFPLYINTERTDRVTKALIDGKIAIFVDGSPSVLLTPVSYFDFFISPEDYNVSWMYATFSRILRLIAVLFSICATPLYVAVLNYHYELIPSDLLETLILSRAQVPFPPLIEALFLELAIDLLREAGARLPMKVGQTLGIVGGIVIGQASVQAGLTSNILLIIVALSALASFITPIYKMGNAVRLLRFPFLAFAEIGGLFGISLGFIFLFTHLFRLTSLRKPYALFYPTRQQSVKDSWIRFPLTMIDTRDVQARPQHVKKAAKGISTKHRSDFDD.

Over residues 1 to 13 (MIWNWLRKKKKSN) the composition is skewed to basic residues. The tract at residues 1–175 (MIWNWLRKKK…SGGNSIYDFT (175 aa)) is disordered. Positions 47-56 (KNNEQKDSSQ) are enriched in basic and acidic residues. Low complexity-rich tracts occupy residues 57–72 (DKQQSAKQGDSSQDKQ), 88–101 (PKQGDSSQDKQQSA), and 122–150 (DKQQSAKQGDSSQDKQQSAKQGDSSQDKQ). Transmembrane regions (helical) follow at residues 414-434 (IFVDGSPSVLLTPVSYFDFFI), 451-471 (ILRLIAVLFSICATPLYVAVL), 491-511 (AQVPFPPLIEALFLELAIDLL), 541-561 (AGLTSNILLIIVALSALASFI), and 578-598 (FLAFAEIGGLFGISLGFIFLF).

This sequence belongs to the GerABKA family.

It localises to the cell membrane. Its function is as follows. Required for inosine germination. This Bacillus cereus protein is Spore germination protein GerIA (gerIA).